A 369-amino-acid chain; its full sequence is DNA replication and repair protein RecF (369 aa).

30–37 contacts ATP; it reads GQNAQGKT.

The protein belongs to the RecF family.

The protein localises to the cytoplasm. In terms of biological role, the RecF protein is involved in DNA metabolism; it is required for DNA replication and normal SOS inducibility. RecF binds preferentially to single-stranded, linear DNA. It also seems to bind ATP. This chain is DNA replication and repair protein RecF, found in Acetivibrio thermocellus (strain ATCC 27405 / DSM 1237 / JCM 9322 / NBRC 103400 / NCIMB 10682 / NRRL B-4536 / VPI 7372) (Clostridium thermocellum).